We begin with the raw amino-acid sequence, 354 residues long: Kelch domain-containing protein 8B (354 aa).

8 Kelch repeats span residues 1–31 (MSAGGGRAFAWQVFPPMPTCRVYGTVAHQDE), 32–79 (HLLV…VLGK), 81–127 (VLVV…ERDG), 128–175 (MVYA…LHGN), 176–222 (KIYV…MAEG), 224–281 (VFSL…SLGG), 282–329 (HIVA…QAGP), and 331–354 (LFVIGGVAQGPSQAVEALCLRDGV).

It is found in the cytoplasm. The protein localises to the midbody. Its function is as follows. Involved in pinching off the separated nuclei at the cleavage furrow and in cytokinesis. Required for mitotic integrity and maintenance of chromosomal stability. Protects cells against mitotic errors, centrosomal amplification, micronucleus formation and aneuploidy. Plays a key role of midbody function involving abscission of the daughter cells during cytokinesis and appropriate chromosomal and nuclear segregation into the daughter cells. This chain is Kelch domain-containing protein 8B (KLHDC8B), found in Pongo abelii (Sumatran orangutan).